The sequence spans 642 residues: Threonine--tRNA ligase (642 aa).

In terms of domain architecture, TGS spans 1–61 (MPVITLPDGS…ETDAELSIIT (61 aa)). Positions 243–534 (DHRKIGKQLD…LIEEYAGRFP (292 aa)) are catalytic. 3 residues coordinate Zn(2+): C334, H385, and H511.

This sequence belongs to the class-II aminoacyl-tRNA synthetase family. As to quaternary structure, homodimer. Zn(2+) serves as cofactor.

Its subcellular location is the cytoplasm. It catalyses the reaction tRNA(Thr) + L-threonine + ATP = L-threonyl-tRNA(Thr) + AMP + diphosphate + H(+). Its function is as follows. Catalyzes the attachment of threonine to tRNA(Thr) in a two-step reaction: L-threonine is first activated by ATP to form Thr-AMP and then transferred to the acceptor end of tRNA(Thr). Also edits incorrectly charged L-seryl-tRNA(Thr). This Shewanella baltica (strain OS195) protein is Threonine--tRNA ligase.